The chain runs to 126 residues: Glycine cleavage system H protein (126 aa).

A Lipoyl-binding domain is found at 24–105; sequence TLTVGITDHA…AYGVWLFKIK (82 aa). The residue at position 65 (K65) is an N6-lipoyllysine.

The protein belongs to the GcvH family. The glycine cleavage system is composed of four proteins: P, T, L and H. It depends on (R)-lipoate as a cofactor.

The glycine cleavage system catalyzes the degradation of glycine. The H protein shuttles the methylamine group of glycine from the P protein to the T protein. The polypeptide is Glycine cleavage system H protein (Burkholderia cenocepacia (strain ATCC BAA-245 / DSM 16553 / LMG 16656 / NCTC 13227 / J2315 / CF5610) (Burkholderia cepacia (strain J2315))).